The chain runs to 156 residues: Small ribosomal subunit protein uS7 (156 aa).

Belongs to the universal ribosomal protein uS7 family. Part of the 30S ribosomal subunit. Contacts proteins S9 and S11.

Its function is as follows. One of the primary rRNA binding proteins, it binds directly to 16S rRNA where it nucleates assembly of the head domain of the 30S subunit. Is located at the subunit interface close to the decoding center, probably blocks exit of the E-site tRNA. The protein is Small ribosomal subunit protein uS7 of Enterobacter sp. (strain 638).